The following is a 339-amino-acid chain: NADH-quinone oxidoreductase subunit H (339 aa).

Transmembrane regions (helical) follow at residues 9-29, 50-70, 82-102, 115-135, 161-181, 187-207, 235-255, 275-295, and 311-331; these read IFPL…LILC, PNVV…KLLF, ILFI…WAVI, VGVL…IIAG, MGLV…SEII, MPWW…ISVL, MGFA…SAMT, IPGF…FLWI, and GWKV…SVLV.

Belongs to the complex I subunit 1 family. NDH-1 is composed of 14 different subunits. Subunits NuoA, H, J, K, L, M, N constitute the membrane sector of the complex.

The protein resides in the cell inner membrane. It catalyses the reaction a quinone + NADH + 5 H(+)(in) = a quinol + NAD(+) + 4 H(+)(out). Its function is as follows. NDH-1 shuttles electrons from NADH, via FMN and iron-sulfur (Fe-S) centers, to quinones in the respiratory chain. The immediate electron acceptor for the enzyme in this species is believed to be ubiquinone. Couples the redox reaction to proton translocation (for every two electrons transferred, four hydrogen ions are translocated across the cytoplasmic membrane), and thus conserves the redox energy in a proton gradient. This subunit may bind ubiquinone. In Rickettsia peacockii (strain Rustic), this protein is NADH-quinone oxidoreductase subunit H.